Here is an 87-residue protein sequence, read N- to C-terminus: Probable Fe(2+)-trafficking protein (87 aa).

This sequence belongs to the Fe(2+)-trafficking protein family.

Functionally, could be a mediator in iron transactions between iron acquisition and iron-requiring processes, such as synthesis and/or repair of Fe-S clusters in biosynthetic enzymes. This chain is Probable Fe(2+)-trafficking protein, found in Francisella tularensis subsp. novicida (strain U112).